The primary structure comprises 240 residues: uncharacterized protein (240 aa).

Positions 216–240 (MKQSKNKPRIRQAVGATRQCRKPQA) are disordered.

This is an uncharacterized protein from Escherichia coli (strain K12).